The following is a 184-amino-acid chain: Large ribosomal subunit protein uL15 (184 aa).

Residues 1 to 55 are disordered; the sequence is MDLSSLSPAKGSVKNKKRVGRGQGSGNGTTAGKGNKGQQSRSGYKRPVSEGGQMP. The span at 21 to 35 shows a compositional bias: gly residues; sequence RGQGSGNGTTAGKGN.

It belongs to the universal ribosomal protein uL15 family. In terms of assembly, part of the 50S ribosomal subunit.

Functionally, binds to the 23S rRNA. The polypeptide is Large ribosomal subunit protein uL15 (Prosthecochloris aestuarii (strain DSM 271 / SK 413)).